A 155-amino-acid polypeptide reads, in one-letter code: SsrA-binding protein (155 aa).

It belongs to the SmpB family.

Its subcellular location is the cytoplasm. Required for rescue of stalled ribosomes mediated by trans-translation. Binds to transfer-messenger RNA (tmRNA), required for stable association of tmRNA with ribosomes. tmRNA and SmpB together mimic tRNA shape, replacing the anticodon stem-loop with SmpB. tmRNA is encoded by the ssrA gene; the 2 termini fold to resemble tRNA(Ala) and it encodes a 'tag peptide', a short internal open reading frame. During trans-translation Ala-aminoacylated tmRNA acts like a tRNA, entering the A-site of stalled ribosomes, displacing the stalled mRNA. The ribosome then switches to translate the ORF on the tmRNA; the nascent peptide is terminated with the 'tag peptide' encoded by the tmRNA and targeted for degradation. The ribosome is freed to recommence translation, which seems to be the essential function of trans-translation. This Bacillus cereus (strain 03BB102) protein is SsrA-binding protein.